The chain runs to 431 residues: Glutamate-1-semialdehyde 2,1-aminomutase 1 (431 aa).

K268 carries the N6-(pyridoxal phosphate)lysine modification.

It belongs to the class-III pyridoxal-phosphate-dependent aminotransferase family. HemL subfamily. As to quaternary structure, homodimer. The cofactor is pyridoxal 5'-phosphate.

The protein resides in the cytoplasm. It catalyses the reaction (S)-4-amino-5-oxopentanoate = 5-aminolevulinate. It functions in the pathway porphyrin-containing compound metabolism; protoporphyrin-IX biosynthesis; 5-aminolevulinate from L-glutamyl-tRNA(Glu): step 2/2. This chain is Glutamate-1-semialdehyde 2,1-aminomutase 1, found in Anoxybacillus flavithermus (strain DSM 21510 / WK1).